Consider the following 131-residue polypeptide: Fluoride-specific ion channel FluC (131 aa).

The next 4 helical transmembrane spans lie at alanine 10 to valine 30, phenylalanine 36 to tryptophan 56, leucine 71 to valine 91, and valine 99 to glycine 119. Residues glycine 78 and threonine 81 each coordinate Na(+).

The protein belongs to the fluoride channel Fluc/FEX (TC 1.A.43) family.

It localises to the cell membrane. It catalyses the reaction fluoride(in) = fluoride(out). Na(+) is not transported, but it plays an essential structural role and its presence is essential for fluoride channel function. Functionally, fluoride-specific ion channel. Important for reducing fluoride concentration in the cell, thus reducing its toxicity. The sequence is that of Fluoride-specific ion channel FluC from Methanopyrus kandleri (strain AV19 / DSM 6324 / JCM 9639 / NBRC 100938).